We begin with the raw amino-acid sequence, 340 residues long: NADH-quinone oxidoreductase subunit H (340 aa).

A run of 9 helical transmembrane segments spans residues 9 to 29 (IWIIIKIVLILVPLLVAVAFI), 81 to 101 (LIAPILSLVPALAAWAVIPFA), 113 to 133 (LLFLFAMTSLGVYGILVAGWA), 158 to 178 (GFALVGVLLAAGTMNLQGIVL), 184 to 204 (LWHWFWLPLLPLFVTYWITAV), 221 to 240 (IVAGFHVEYAGVTFALFFLA), 245 to 264 (MVLVSAIATVIFLGGWLSPF), 273 to 293 (LFAWVPGIVWFVLKLSLFIFT), and 316 to 336 (VLIPVTLVWIIILALAIEFHW).

Belongs to the complex I subunit 1 family. As to quaternary structure, NDH-1 is composed of 14 different subunits. Subunits NuoA, H, J, K, L, M, N constitute the membrane sector of the complex.

Its subcellular location is the cell inner membrane. The enzyme catalyses a quinone + NADH + 5 H(+)(in) = a quinol + NAD(+) + 4 H(+)(out). NDH-1 shuttles electrons from NADH, via FMN and iron-sulfur (Fe-S) centers, to quinones in the respiratory chain. The immediate electron acceptor for the enzyme in this species is believed to be ubiquinone. Couples the redox reaction to proton translocation (for every two electrons transferred, four hydrogen ions are translocated across the cytoplasmic membrane), and thus conserves the redox energy in a proton gradient. This subunit may bind ubiquinone. This chain is NADH-quinone oxidoreductase subunit H, found in Coxiella burnetii (strain CbuK_Q154) (Coxiella burnetii (strain Q154)).